Reading from the N-terminus, the 470-residue chain is Flotillin-like protein 1 (470 aa).

Cys35 carries the S-palmitoyl cysteine lipid modification. Residues 305–354 (EYETKVQEANWELYNKQKQAEAVLYEKQKQAEAQKAQADAAFYSKQKEAE) adopt a coiled-coil conformation.

The protein belongs to the band 7/mec-2 family. Flotillin subfamily. Post-translationally, may be palmitoylated.

It is found in the cell membrane. The protein resides in the membrane. The protein localises to the caveola. In terms of biological role, may act as a scaffolding protein within caveolar membranes, functionally participating in formation of caveolae or caveolae-like vesicles. This chain is Flotillin-like protein 1 (FLOT1), found in Arabidopsis thaliana (Mouse-ear cress).